Here is a 429-residue protein sequence, read N- to C-terminus: Serine--tRNA ligase (429 aa).

An L-serine-binding site is contributed by 236–238 (TAE). 267–269 (RRE) is a binding site for ATP. Glu290 provides a ligand contact to L-serine. 354–357 (EISS) is a binding site for ATP. Ser390 is a binding site for L-serine.

It belongs to the class-II aminoacyl-tRNA synthetase family. Type-1 seryl-tRNA synthetase subfamily. As to quaternary structure, homodimer. The tRNA molecule binds across the dimer.

Its subcellular location is the cytoplasm. The enzyme catalyses tRNA(Ser) + L-serine + ATP = L-seryl-tRNA(Ser) + AMP + diphosphate + H(+). It catalyses the reaction tRNA(Sec) + L-serine + ATP = L-seryl-tRNA(Sec) + AMP + diphosphate + H(+). It participates in aminoacyl-tRNA biosynthesis; selenocysteinyl-tRNA(Sec) biosynthesis; L-seryl-tRNA(Sec) from L-serine and tRNA(Sec): step 1/1. Catalyzes the attachment of serine to tRNA(Ser). Is also able to aminoacylate tRNA(Sec) with serine, to form the misacylated tRNA L-seryl-tRNA(Sec), which will be further converted into selenocysteinyl-tRNA(Sec). The polypeptide is Serine--tRNA ligase (Gloeobacter violaceus (strain ATCC 29082 / PCC 7421)).